Reading from the N-terminus, the 213-residue chain is Superoxide dismutase [Mn] (213 aa).

Residues H27, H82, D168, and H172 each contribute to the Mn(2+) site.

The protein belongs to the iron/manganese superoxide dismutase family. In terms of assembly, homodimer. Mn(2+) serves as cofactor.

It catalyses the reaction 2 superoxide + 2 H(+) = H2O2 + O2. Functionally, destroys superoxide anion radicals which are normally produced within the cells and which are toxic to biological systems. In Mannheimia haemolytica (Pasteurella haemolytica), this protein is Superoxide dismutase [Mn] (sodA).